The following is a 321-amino-acid chain: Ribosomal RNA small subunit methyltransferase H (321 aa).

S-adenosyl-L-methionine contacts are provided by residues 42 to 44, Asp62, Phe86, Asp107, and Gln114; that span reads GGH.

The protein belongs to the methyltransferase superfamily. RsmH family.

The protein localises to the cytoplasm. It carries out the reaction cytidine(1402) in 16S rRNA + S-adenosyl-L-methionine = N(4)-methylcytidine(1402) in 16S rRNA + S-adenosyl-L-homocysteine + H(+). Specifically methylates the N4 position of cytidine in position 1402 (C1402) of 16S rRNA. The protein is Ribosomal RNA small subunit methyltransferase H of Herminiimonas arsenicoxydans.